Reading from the N-terminus, the 458-residue chain is Bifunctional protein GlmU (458 aa).

The pyrophosphorylase stretch occupies residues methionine 1–arginine 230. Residues leucine 9 to glycine 12, lysine 23, glutamine 73, and glycine 78 to threonine 79 each bind UDP-N-acetyl-alpha-D-glucosamine. Aspartate 103 is a Mg(2+) binding site. UDP-N-acetyl-alpha-D-glucosamine-binding residues include glycine 140, glutamate 155, asparagine 170, and asparagine 228. Asparagine 228 contributes to the Mg(2+) binding site. The interval valine 231 to asparagine 251 is linker. The tract at residues glycine 252 to aspartate 458 is N-acetyltransferase. 2 residues coordinate UDP-N-acetyl-alpha-D-glucosamine: arginine 333 and lysine 351. Histidine 363 functions as the Proton acceptor in the catalytic mechanism. Residues tyrosine 366 and asparagine 377 each contribute to the UDP-N-acetyl-alpha-D-glucosamine site. Residues asparagine 386 to tyrosine 387, serine 405, alanine 423, and arginine 440 contribute to the acetyl-CoA site.

In the N-terminal section; belongs to the N-acetylglucosamine-1-phosphate uridyltransferase family. The protein in the C-terminal section; belongs to the transferase hexapeptide repeat family. In terms of assembly, homotrimer. Mg(2+) serves as cofactor.

The protein localises to the cytoplasm. The enzyme catalyses alpha-D-glucosamine 1-phosphate + acetyl-CoA = N-acetyl-alpha-D-glucosamine 1-phosphate + CoA + H(+). The catalysed reaction is N-acetyl-alpha-D-glucosamine 1-phosphate + UTP + H(+) = UDP-N-acetyl-alpha-D-glucosamine + diphosphate. The protein operates within nucleotide-sugar biosynthesis; UDP-N-acetyl-alpha-D-glucosamine biosynthesis; N-acetyl-alpha-D-glucosamine 1-phosphate from alpha-D-glucosamine 6-phosphate (route II): step 2/2. Its pathway is nucleotide-sugar biosynthesis; UDP-N-acetyl-alpha-D-glucosamine biosynthesis; UDP-N-acetyl-alpha-D-glucosamine from N-acetyl-alpha-D-glucosamine 1-phosphate: step 1/1. It functions in the pathway bacterial outer membrane biogenesis; LPS lipid A biosynthesis. Functionally, catalyzes the last two sequential reactions in the de novo biosynthetic pathway for UDP-N-acetylglucosamine (UDP-GlcNAc). The C-terminal domain catalyzes the transfer of acetyl group from acetyl coenzyme A to glucosamine-1-phosphate (GlcN-1-P) to produce N-acetylglucosamine-1-phosphate (GlcNAc-1-P), which is converted into UDP-GlcNAc by the transfer of uridine 5-monophosphate (from uridine 5-triphosphate), a reaction catalyzed by the N-terminal domain. The sequence is that of Bifunctional protein GlmU from Enterococcus faecalis (strain ATCC 700802 / V583).